Consider the following 363-residue polypeptide: Adenosine kinase (363 aa).

Mg(2+) is bound by residues Ala-185, Ile-188, and Ala-191. The active site involves Asp-318.

This sequence belongs to the carbohydrate kinase PfkB family. Mg(2+) is required as a cofactor.

It catalyses the reaction adenosine + ATP = AMP + ADP + H(+). It participates in purine metabolism; AMP biosynthesis via salvage pathway; AMP from adenosine: step 1/1. Functionally, ATP-dependent phosphorylation of adenosine and other related nucleoside analogs to monophosphate derivatives. It is a key purine metabolic enzyme in the opportunistic parasitic protozoan toxoplasma gondii as it cannot synthesize purines de novo. This Toxoplasma gondii protein is Adenosine kinase (AK).